The following is a 90-amino-acid chain: Probable Fe(2+)-trafficking protein (90 aa).

It belongs to the Fe(2+)-trafficking protein family.

Could be a mediator in iron transactions between iron acquisition and iron-requiring processes, such as synthesis and/or repair of Fe-S clusters in biosynthetic enzymes. In Dechloromonas aromatica (strain RCB), this protein is Probable Fe(2+)-trafficking protein.